The chain runs to 194 residues: Outer membrane protein A (194 aa).

Residues 1-24 form the signal peptide; sequence MNKPSKFALALAFAAVTASGVASA. A beta stranded transmembrane segment spans residues 30–38; sequence WRNPYGNVW. Residues 77-193 enclose the OmpA-like domain; that stretch reads MAAKVVFNAD…RVEIEIVGSR (117 aa).

This sequence belongs to the outer membrane OOP (TC 1.B.6) superfamily.

The protein localises to the cell outer membrane. Structural protein that may protect the integrity of the bacterium. The protein is Outer membrane protein A of Bordetella avium.